Here is a 248-residue protein sequence, read N- to C-terminus: Granzyme C (248 aa).

Residues 1-18 form the signal peptide; it reads MPPVLILLTLLLPLRAGA. A propeptide spanning residues 19-20 is cleaved from the precursor; sequence EE. In terms of domain architecture, Peptidase S1 spans 21–246; it reads IIGGNEISPH…FVSWIKKTMK (226 aa). C50 and C66 are joined by a disulfide. Catalysis depends on charge relay system residues H65 and D109. 2 disulfide bridges follow: C143-C210 and C174-C189. Catalysis depends on S204, which acts as the Charge relay system.

The protein belongs to the peptidase S1 family. Granzyme subfamily.

The protein resides in the cytolytic granule. In terms of biological role, this enzyme is probably necessary for target cell lysis in cell-mediated immune responses. The polypeptide is Granzyme C (Gzmc) (Mus musculus (Mouse)).